Consider the following 331-residue polypeptide: Glyceraldehyde-3-phosphate dehydrogenase (331 aa).

NAD(+)-binding positions include 12 to 13, aspartate 34, arginine 78, and threonine 120; that span reads RI. Lysine 132 and lysine 138 each carry N6-acetyllysine. D-glyceraldehyde 3-phosphate contacts are provided by residues 149–151 and threonine 180; that span reads SCT. The Nucleophile role is filled by cysteine 150. At lysine 192 the chain carries N6-acetyllysine. D-glyceraldehyde 3-phosphate-binding positions include 209-210 and arginine 232; that span reads TG. The residue at position 249 (lysine 249) is an N6-acetyllysine. An NAD(+)-binding site is contributed by asparagine 314.

Belongs to the glyceraldehyde-3-phosphate dehydrogenase family. Homotetramer.

The protein localises to the cytoplasm. The enzyme catalyses D-glyceraldehyde 3-phosphate + phosphate + NAD(+) = (2R)-3-phospho-glyceroyl phosphate + NADH + H(+). It functions in the pathway carbohydrate degradation; glycolysis; pyruvate from D-glyceraldehyde 3-phosphate: step 1/5. Its function is as follows. Catalyzes the oxidative phosphorylation of glyceraldehyde 3-phosphate (G3P) to 1,3-bisphosphoglycerate (BPG) using the cofactor NAD. The first reaction step involves the formation of a hemiacetal intermediate between G3P and a cysteine residue, and this hemiacetal intermediate is then oxidized to a thioester, with concomitant reduction of NAD to NADH. The reduced NADH is then exchanged with the second NAD, and the thioester is attacked by a nucleophilic inorganic phosphate to produce BPG. The polypeptide is Glyceraldehyde-3-phosphate dehydrogenase (gapA) (Escherichia coli O6:H1 (strain CFT073 / ATCC 700928 / UPEC)).